The following is a 147-amino-acid chain: Probable cytidine deaminase (147 aa).

The region spanning glutamate 4 to glutamate 130 is the CMP/dCMP-type deaminase domain. Residue asparagine 45–tyrosine 51 coordinates substrate. Cysteine 56 contacts Zn(2+). Glutamate 58 serves as the catalytic Proton donor. Positions 90 and 93 each coordinate Zn(2+).

This sequence belongs to the cytidine and deoxycytidylate deaminase family. The cofactor is Zn(2+).

The enzyme catalyses cytidine + H2O + H(+) = uridine + NH4(+). It catalyses the reaction 2'-deoxycytidine + H2O + H(+) = 2'-deoxyuridine + NH4(+). Functionally, this enzyme scavenges exogenous and endogenous cytidine and 2'-deoxycytidine for UMP synthesis. The protein is Probable cytidine deaminase (cda) of Dictyostelium discoideum (Social amoeba).